Here is a 471-residue protein sequence, read N- to C-terminus: Sestrin-2 (471 aa).

N-acetylmethionine is present on Met-1. Residues Gly-57–Thr-230 are N-terminal domain; mediates the alkylhydroperoxide reductase activity. The Cysteine sulfenic acid (-SOH) intermediate role is filled by Cys-116. Lys-166 participates in a covalent cross-link: Glycyl lysine isopeptide (Lys-Gly) (interchain with G-Cter in ubiquitin). Positions Asp-212–Gly-241 are disordered. A Phosphoserine modification is found at Ser-240. The tract at residues Ala-299–Thr-471 is C-terminal domain; mediates TORC1 regulation. L-leucine contacts are provided by residues Thr-365–Thr-368, Thr-377, and Glu-442.

The protein belongs to the sestrin family. As to quaternary structure, interacts with the GATOR2 complex which is composed of MIOS, SEC13, SEH1L, WDR24 and WDR59; the interaction is negatively regulated by leucine. Conveys leucine availability via direct interaction with SEH1L and WDR24 components of the GATOR2 complex. Interacts with RRAGA, RRAGB, RRAGC and RRAGD; may function as a guanine nucleotide dissociation inhibitor for RRAGs and regulate them. May interact with the TORC2 complex. Interacts with KEAP1, RBX1, SQSTM and ULK1; to regulate the degradation of KEAP1. May also associate with the complex composed of TSC1, TSC2 and the AMP-responsive protein kinase/AMPK to regulate TORC1 signaling. May interact with PRDX1. In terms of processing, phosphorylated by ULK1 at multiple sites. Post-translationally, ubiquitinated at Lys-166 by RNF167 via 'Lys-63'-linked polyubiquitination in response to leucine deprivation: ubiquitination promotes SESN2-interaction with the GATOR2 complex, leading to inhibit the TORC1 signaling pathway. Deubiquitinated at Lys-166 by STAMBPL1, promoting the TORC1 signaling pathway. Ubiquitinated by RNF186; ubiquitination mediates proteasomal degradation.

It is found in the cytoplasm. It carries out the reaction a hydroperoxide + L-cysteinyl-[protein] = S-hydroxy-L-cysteinyl-[protein] + an alcohol. Functions as an intracellular leucine sensor that negatively regulates the mTORC1 signaling pathway through the GATOR complex. In absence of leucine, binds the GATOR subcomplex GATOR2 and prevents mTORC1 signaling. Binding of leucine to SESN2 disrupts its interaction with GATOR2 thereby activating the TORC1 signaling pathway. This stress-inducible metabolic regulator also plays a role in protection against oxidative and genotoxic stresses. May negatively regulate protein translation in response to endoplasmic reticulum stress, via mTORC1. May positively regulate the transcription by NFE2L2 of genes involved in the response to oxidative stress by facilitating the SQSTM1-mediated autophagic degradation of KEAP1. May also mediate TP53 inhibition of TORC1 signaling upon genotoxic stress. Moreover, may prevent the accumulation of reactive oxygen species (ROS) through the alkylhydroperoxide reductase activity born by the N-terminal domain of the protein. Was originally reported to contribute to oxidative stress resistance by reducing PRDX1. However, this could not be confirmed. This Bos taurus (Bovine) protein is Sestrin-2.